The following is a 601-amino-acid chain: DNA ligase (601 aa).

ATP is bound at residue Asp258. The active-site N6-AMP-lysine intermediate is Lys260. Residues Arg265, Arg280, Glu310, Phe350, Arg427, and Lys433 each contribute to the ATP site. A disordered region spans residues Asp568–Val601.

The protein belongs to the ATP-dependent DNA ligase family. Requires Mg(2+) as cofactor.

The catalysed reaction is ATP + (deoxyribonucleotide)n-3'-hydroxyl + 5'-phospho-(deoxyribonucleotide)m = (deoxyribonucleotide)n+m + AMP + diphosphate.. In terms of biological role, DNA ligase that seals nicks in double-stranded DNA during DNA replication, DNA recombination and DNA repair. This chain is DNA ligase, found in Saccharolobus islandicus (strain Y.G.57.14 / Yellowstone #1) (Sulfolobus islandicus).